A 231-amino-acid chain; its full sequence is Probable glutathione S-transferase GSTU1 (231 aa).

The GST N-terminal domain maps to 5 to 84 (KELVLLDFWV…YLDDAFPGTP (80 aa)). Glutathione contacts are provided by residues Ser-15, Lys-42, Ile-56, and 68–69 (ES). A GST C-terminal domain is found at 97–220 (AAYARATARF…LPSPEKVYDF (124 aa)).

It belongs to the GST superfamily. Tau family.

It catalyses the reaction RX + glutathione = an S-substituted glutathione + a halide anion + H(+). Its function is as follows. Conjugation of reduced glutathione to a wide number of exogenous and endogenous hydrophobic electrophiles. The chain is Probable glutathione S-transferase GSTU1 (GSTU1) from Oryza sativa subsp. japonica (Rice).